The chain runs to 98 residues: Alpha-defensin 1 (98 aa).

The N-terminal stretch at methionine 1 to threonine 19 is a signal peptide. A propeptide spanning residues glutamine 20–threonine 63 is cleaved from the precursor. 3 cysteine pairs are disulfide-bonded: cysteine 66/cysteine 96, cysteine 68/cysteine 84, and cysteine 74/cysteine 95.

It belongs to the alpha-defensin family. Paneth cells of the small bowel.

The protein localises to the secreted. Functionally, has broad-spectrum antimicrobial properties. The antimicrobial activity decreases in the present of salt in vitro. Binds anionic phospholipids, which leads to the aggregation of liposomes in vitro. Membrane permeabilization of the target cells is an essential part of the peptide's mode of antimicrobial activity. No hemolytic activity against sheep or horse erythrocytes. Has antibacterial activity against the bacterial horse pathogens Gram-positive R.equi ATCC 33701 P(-) (minimum bactericidal concentration or MBC=5 ug/ml) and R.equi ATCC 33701 P(+) (MBC=5 ug/ml), which are resistant against beta-lactam antibiotics. Also has antibacterial activity against highly infectious wild-type strain R.equi 85F P(+) (MBC=5 ug/ml), S.equi subsp. equi (MBC=5 ug/ml), S.equi subsp. zooepidemicus (MBC=5 ug/ml), S.dysgalactiae subsp. equisimilis (MBC=10 ug/ml), S.choleraesuis subsp. choleraesuis serovar Typhimurium (MBC=10 ug/ml), and P.multocida subsp. multocida (MBC=&gt;10 ug/ml). Probably contributes to the antimicrobial barrier function of the small bowel mucosa. The chain is Alpha-defensin 1 from Equus caballus (Horse).